The following is a 372-amino-acid chain: Queuine tRNA-ribosyltransferase (372 aa).

The Proton acceptor role is filled by Asp-89. Substrate is bound by residues 89 to 93, Asp-143, Gln-185, and Gly-212; that span reads DSGGF. The segment at 243–249 is RNA binding; the sequence is GVGKPED. The active-site Nucleophile is Asp-262. Residues 267–271 form an RNA binding; important for wobble base 34 recognition region; it reads TRNAR. Residues Cys-300, Cys-302, Cys-305, and His-331 each contribute to the Zn(2+) site.

This sequence belongs to the queuine tRNA-ribosyltransferase family. Homodimer. Within each dimer, one monomer is responsible for RNA recognition and catalysis, while the other monomer binds to the replacement base PreQ1. Zn(2+) is required as a cofactor.

The enzyme catalyses 7-aminomethyl-7-carbaguanine + guanosine(34) in tRNA = 7-aminomethyl-7-carbaguanosine(34) in tRNA + guanine. It functions in the pathway tRNA modification; tRNA-queuosine biosynthesis. Functionally, catalyzes the base-exchange of a guanine (G) residue with the queuine precursor 7-aminomethyl-7-deazaguanine (PreQ1) at position 34 (anticodon wobble position) in tRNAs with GU(N) anticodons (tRNA-Asp, -Asn, -His and -Tyr). Catalysis occurs through a double-displacement mechanism. The nucleophile active site attacks the C1' of nucleotide 34 to detach the guanine base from the RNA, forming a covalent enzyme-RNA intermediate. The proton acceptor active site deprotonates the incoming PreQ1, allowing a nucleophilic attack on the C1' of the ribose to form the product. After dissociation, two additional enzymatic reactions on the tRNA convert PreQ1 to queuine (Q), resulting in the hypermodified nucleoside queuosine (7-(((4,5-cis-dihydroxy-2-cyclopenten-1-yl)amino)methyl)-7-deazaguanosine). The protein is Queuine tRNA-ribosyltransferase of Chromohalobacter salexigens (strain ATCC BAA-138 / DSM 3043 / CIP 106854 / NCIMB 13768 / 1H11).